Reading from the N-terminus, the 26-residue chain is Delta-conotoxin Am2766 (26 aa).

3 disulfides stabilise this stretch: cysteine 1–cysteine 16, cysteine 8–cysteine 20, and cysteine 15–cysteine 24. At glutamate 26 the chain carries Glutamic acid 1-amide.

As to expression, expressed by the venom duct.

It localises to the secreted. In terms of biological role, delta-conotoxins bind to site 6 of voltage-gated sodium channels (Nav) and inhibit the inactivation process. The polypeptide is Delta-conotoxin Am2766 (Conus amadis (Amadis cone)).